The chain runs to 337 residues: tRNA-dihydrouridine synthase B (337 aa).

FMN contacts are provided by residues 19-21 (PMA) and Gln-73. Cys-103 serves as the catalytic Proton donor. Residues Lys-142, 203–205 (NGD), and 227–228 (GR) each bind FMN.

It belongs to the Dus family. DusB subfamily. The cofactor is FMN.

It catalyses the reaction a 5,6-dihydrouridine in tRNA + NAD(+) = a uridine in tRNA + NADH + H(+). It carries out the reaction a 5,6-dihydrouridine in tRNA + NADP(+) = a uridine in tRNA + NADPH + H(+). Its function is as follows. Catalyzes the synthesis of 5,6-dihydrouridine (D), a modified base found in the D-loop of most tRNAs, via the reduction of the C5-C6 double bond in target uridines. The polypeptide is tRNA-dihydrouridine synthase B (Pseudomonas putida (strain ATCC 47054 / DSM 6125 / CFBP 8728 / NCIMB 11950 / KT2440)).